Consider the following 441-residue polypeptide: Glutamate--tRNA ligase 2 (441 aa).

The 'HIGH' region motif lies at proline 9–asparagine 19. The short motif at alanine 239 to arginine 243 is the 'KMSKS' region element. Lysine 242 is an ATP binding site.

This sequence belongs to the class-I aminoacyl-tRNA synthetase family. Glutamate--tRNA ligase type 1 subfamily. As to quaternary structure, monomer.

The protein resides in the cytoplasm. The catalysed reaction is tRNA(Glu) + L-glutamate + ATP = L-glutamyl-tRNA(Glu) + AMP + diphosphate. Its function is as follows. Catalyzes the attachment of glutamate to tRNA(Glu) in a two-step reaction: glutamate is first activated by ATP to form Glu-AMP and then transferred to the acceptor end of tRNA(Glu). In Cereibacter sphaeroides (strain ATCC 17029 / ATH 2.4.9) (Rhodobacter sphaeroides), this protein is Glutamate--tRNA ligase 2.